A 291-amino-acid polypeptide reads, in one-letter code: Probable ABC transporter permease protein PH1038 (291 aa).

Helical transmembrane passes span 7–27 (PFFFLLPALTLMVPFVIYPVF), 75–95 (IVWIAIHLPTTIFLGLGFALL), 106–126 (IIKSIIFLGMVIPMVVGGLII), 133–153 (GAGVIPAFFKLIGIEKLAITW), 160–180 (ALFSVILGSIWIWTGFSMLMY), 208–228 (FVIWPLLRPITVVIVAMTLLW), 232–252 (IFDIVYVATGGGPGGASMVLA), and 267–287 (YAAVVAVLLTALTFIPALWLI). Residues 71 to 286 (LIHNIVWIAI…ALTFIPALWL (216 aa)) form the ABC transmembrane type-1 domain.

The protein belongs to the binding-protein-dependent transport system permease family. MalFG subfamily.

It is found in the cell membrane. In terms of biological role, probably part of a binding-protein-dependent transport system PH1036/38/39. Probably responsible for the translocation of the substrate across the membrane. The protein is Probable ABC transporter permease protein PH1038 of Pyrococcus horikoshii (strain ATCC 700860 / DSM 12428 / JCM 9974 / NBRC 100139 / OT-3).